Here is a 63-residue protein sequence, read N- to C-terminus: Large ribosomal subunit protein bL28 (63 aa).

It belongs to the bacterial ribosomal protein bL28 family.

The polypeptide is Large ribosomal subunit protein bL28 (Geotalea uraniireducens (strain Rf4) (Geobacter uraniireducens)).